Here is a 117-residue protein sequence, read N- to C-terminus: Aspartate 1-decarboxylase (117 aa).

Serine 25 serves as the catalytic Schiff-base intermediate with substrate; via pyruvic acid. A Pyruvic acid (Ser) modification is found at serine 25. Substrate is bound at residue threonine 57. The active-site Proton donor is the tyrosine 58. 72 to 74 contacts substrate; it reads GAA.

This sequence belongs to the PanD family. Heterooctamer of four alpha and four beta subunits. Pyruvate serves as cofactor. In terms of processing, is synthesized initially as an inactive proenzyme, which is activated by self-cleavage at a specific serine bond to produce a beta-subunit with a hydroxyl group at its C-terminus and an alpha-subunit with a pyruvoyl group at its N-terminus.

It localises to the cytoplasm. It catalyses the reaction L-aspartate + H(+) = beta-alanine + CO2. It functions in the pathway cofactor biosynthesis; (R)-pantothenate biosynthesis; beta-alanine from L-aspartate: step 1/1. Functionally, catalyzes the pyruvoyl-dependent decarboxylation of aspartate to produce beta-alanine. In Helicobacter pylori (strain J99 / ATCC 700824) (Campylobacter pylori J99), this protein is Aspartate 1-decarboxylase.